Consider the following 277-residue polypeptide: uncharacterized protein (277 aa).

The next 4 helical transmembrane spans lie at 37–59 (YLRY…LYIW), 63–82 (LIFG…PKVI), 214–236 (MLCG…KTYI), and 246–268 (WITS…TYLF).

Its subcellular location is the cell membrane. This is an uncharacterized protein from Bacillus anthracis.